The primary structure comprises 211 residues: Proline-rich 33 kDa extensin-related protein (211 aa).

Positions 1–14 (AILGVAIFAAPSLA) are cleaved as a signal peptide. 2 stretches are compositionally biased toward pro residues: residues 25–59 (PPVY…PVHK) and 82–93 (HKPPVYKPPVQK). The interval 25–211 (PPVYTPPVHK…RHPPVENTGN (187 aa)) is disordered. Basic residues-rich tracts occupy residues 101-111 (PVHKPPIHKPP) and 127-139 (PIHK…RPPV). 2 stretches are compositionally biased toward basic and acidic residues: residues 142–159 (PPTE…EHKP) and 167–177 (KTEKPVPEHKP). The segment covering 179-198 (HLPPIVVRPPPTHKPNPPYG) has biased composition (pro residues).

It belongs to the plant proline-rich protein superfamily. ENOD12 family.

It is found in the secreted. The protein resides in the cell wall. The protein is Proline-rich 33 kDa extensin-related protein of Daucus carota (Wild carrot).